The sequence spans 259 residues: Probable ABC transporter arginine-binding protein ArtJ (259 aa).

The N-terminal stretch at 1–25 is a signal peptide; the sequence is MIKQIGRFFRAFIFIMPLSLTSCES. Residues asparagine 38, glutamate 45, alanine 96, glycine 97, serine 99, arginine 104, and phenylalanine 149 each contribute to the L-arginine site.

Belongs to the bacterial solute-binding protein 3 family.

It is found in the secreted. It localises to the cell surface. In terms of biological role, probably part of an ABC transporter complex involved in arginine transport. Binds arginine. Interacts with host epithelial cells, suggesting a role in host-cell adhesion during infection. The chain is Probable ABC transporter arginine-binding protein ArtJ from Chlamydia pneumoniae (Chlamydophila pneumoniae).